A 641-amino-acid chain; its full sequence is Tetracycline resistance protein TetQ (641 aa).

Residues 1–244 (MNIINLGILA…AITSFILPPA (244 aa)) form the tr-type G domain. Residues 10-17 (AHIDAGKT), 74-78 (DTPGH), and 128-131 (NKID) each bind GTP.

The protein belongs to the TRAFAC class translation factor GTPase superfamily. Classic translation factor GTPase family. TetM/TetO subfamily.

Abolishes the inhibitory effect of tetracyclin on protein synthesis by a non-covalent modification of the ribosomes. This is Tetracycline resistance protein TetQ (tetQ) from Bacteroides thetaiotaomicron.